The chain runs to 288 residues: Sulfur carrier protein FdhD (288 aa).

Cysteine 122 serves as the catalytic Cysteine persulfide intermediate. Phenylalanine 268–arginine 273 is a binding site for Mo-bis(molybdopterin guanine dinucleotide).

The protein belongs to the FdhD family.

The protein resides in the cytoplasm. Its function is as follows. Required for formate dehydrogenase (FDH) activity. Acts as a sulfur carrier protein that transfers sulfur from IscS to the molybdenum cofactor prior to its insertion into FDH. The chain is Sulfur carrier protein FdhD from Anaeromyxobacter sp. (strain K).